The chain runs to 129 residues: Succinate dehydrogenase subunit 3-1, mitochondrial (129 aa).

The N-terminal 58 residues, 1–58, are a transit peptide targeting the mitochondrion; the sequence is MEKYHSNSRFAPFRDAPFALRGALGSSGSSFSSIDSLRRSSTLEQARGYTSRPLGAVR. Residues 25–35 are compositionally biased toward low complexity; sequence GSSGSSFSSID. The interval 25–80 is disordered; sequence GSSGSSFSSIDSLRRSSTLEQARGYTSRPLGAVRPKMLPSGCRPLHTSHPLSAPVA. Histidine 87 is a binding site for heme. Residues 105-127 traverse the membrane as a helical segment; sequence IFGAALGAAIISIPLATKFSLMF.

Component of complex II composed of eight subunits in plants: four classical SDH subunits SDH1, SDH2, SDH3 and SDH4 (a flavoprotein (FP), an iron-sulfur protein (IP), and a cytochrome b composed of a large and a small subunit.), as well as four subunits unknown in mitochondria from bacteria and heterotrophic eukaryotes. It depends on heme as a cofactor.

It is found in the mitochondrion inner membrane. Its pathway is carbohydrate metabolism; tricarboxylic acid cycle. In terms of biological role, membrane-anchoring subunit of succinate dehydrogenase (SDH). This is Succinate dehydrogenase subunit 3-1, mitochondrial from Oryza sativa subsp. japonica (Rice).